We begin with the raw amino-acid sequence, 344 residues long: Selenide, water dikinase (344 aa).

The active site involves Cys-15. ATP-binding positions include Lys-18 and Thr-46 to Asp-48. Asp-49 contacts Mg(2+). Residues Asp-66, Asp-89, and Gly-137–Ser-139 each bind ATP. Asp-89 serves as a coordination point for Mg(2+). Residue Asp-225 participates in Mg(2+) binding.

The protein belongs to the selenophosphate synthase 1 family. Class I subfamily. Homodimer. The cofactor is Mg(2+).

The enzyme catalyses hydrogenselenide + ATP + H2O = selenophosphate + AMP + phosphate + 2 H(+). In terms of biological role, synthesizes selenophosphate from selenide and ATP. This chain is Selenide, water dikinase, found in Colwellia psychrerythraea (strain 34H / ATCC BAA-681) (Vibrio psychroerythus).